A 243-amino-acid polypeptide reads, in one-letter code: Carboxy-S-adenosyl-L-methionine synthase (243 aa).

Residues tyrosine 40, 65–67, 90–91, 118–119, asparagine 133, and arginine 200 each bind S-adenosyl-L-methionine; these read GCS, DN, and DI.

It belongs to the class I-like SAM-binding methyltransferase superfamily. Cx-SAM synthase family. Homodimer.

The enzyme catalyses prephenate + S-adenosyl-L-methionine = carboxy-S-adenosyl-L-methionine + 3-phenylpyruvate + H2O. Functionally, catalyzes the conversion of S-adenosyl-L-methionine (SAM) to carboxy-S-adenosyl-L-methionine (Cx-SAM). This Shewanella piezotolerans (strain WP3 / JCM 13877) protein is Carboxy-S-adenosyl-L-methionine synthase.